We begin with the raw amino-acid sequence, 418 residues long: Tryptophan synthase beta chain (418 aa).

An N6-(pyridoxal phosphate)lysine modification is found at K109.

The protein belongs to the TrpB family. As to quaternary structure, tetramer of two alpha and two beta chains. Pyridoxal 5'-phosphate serves as cofactor.

The catalysed reaction is (1S,2R)-1-C-(indol-3-yl)glycerol 3-phosphate + L-serine = D-glyceraldehyde 3-phosphate + L-tryptophan + H2O. It participates in amino-acid biosynthesis; L-tryptophan biosynthesis; L-tryptophan from chorismate: step 5/5. In terms of biological role, the beta subunit is responsible for the synthesis of L-tryptophan from indole and L-serine. The protein is Tryptophan synthase beta chain of Thermus thermophilus (strain ATCC 27634 / DSM 579 / HB8).